The chain runs to 5412 residues: Mucin-4 (5412 aa).

Positions 1-28 (MKGARWRRVPWVSLSCLCLCLLPHVVPG) are cleaved as a signal peptide. 2 disordered regions span residues 40-87 (TAAP…TTSK) and 142-249 (TSTD…ATSS). A variable number of tandem repeats (VNTR) region spans residues 43-4241 (PVTSTGSTTA…SVSTGHATPL (4199 aa)). Over residues 142 to 163 (TSTDSTLGNTEETSTAGTESST) the composition is skewed to low complexity. Residues Thr154 and Thr156 are each glycosylated (O-linked (GalNAc...) threonine). The segment covering 164–199 (PVTSAVSITAGQEGQSRTTSWRTSIQDTSASSQNHW) has biased composition (polar residues). Residues 200–223 (TRSTQTTRESQTSTLTHRTTSTPS) show a composition bias toward low complexity. A compositionally biased stretch (polar residues) spans 224-249 (FSPSVHNVTGTVSQKTSPSGETATSS). The N-linked (GlcNAc...) asparagine glycan is linked to Asn230. Residue Thr234 is glycosylated (O-linked (GalNAc...) threonine). Asn255 is a glycosylation site (N-linked (GlcNAc...) asparagine). Composition is skewed to polar residues over residues 267 to 285 (TTST…SVPV), 306 to 328 (SPAT…HQTQ), and 358 to 367 (GFNPSGTVSQ). Disordered stretches follow at residues 267–286 (TTST…VPVT), 303–328 (EGQS…HQTQ), 353–383 (LSSP…PSSV), 438–473 (LSPS…SFSP), 488–580 (WPSS…ALLS), 592–853 (TATS…ASAS), 868–963 (VPGT…SGSG), 983–1864 (SSAS…DASS), 1878–2078 (ASSV…TGHA), 2111–2220 (TALH…ASTG), 2232–2814 (SAST…TGHA), 2837–3306 (IPSS…SSVS), 3320–3580 (SAST…VSTG), 3592–3644 (SVST…VSTG), 3656–3756 (SVST…ASTG), and 3769–4223 (VSTG…GHAT). O-linked (GalNAc...) threonine glycosylation is found at Thr364, Thr369, and Thr376. Residues 368–383 (ETFPSGETTTSSPSSV) are compositionally biased toward low complexity. Composition is skewed to polar residues over residues 450–459 (AFHTQQSEGA), 488–526 (WPSS…TGTA), and 546–557 (TTYSSHSTTLPK). Low complexity-rich tracts occupy residues 558–577 (TTGA…TGEA) and 615–627 (STNH…TSTS). Asn617 carries an N-linked (GlcNAc...) asparagine glycan. 3 O-linked (GalNAc...) threonine glycosylation sites follow: Thr620, Thr666, and Thr688. Positions 628-677 (PQESPAVSQRGHTQAPQTTQESQTTRSVSPMTDTKTVTTPGSSFTASGHS) are enriched in polar residues. Residues 705-717 (TTQAPTTALQAAP) show a composition bias toward low complexity. Residues 729 to 746 (GTSLSKTGALTLANSVVS) show a composition bias toward polar residues. O-linked (GalNAc...) threonine glycosylation occurs at Thr747. The segment covering 756–771 (TSASASTSPDTAAAMT) has biased composition (low complexity). Over residues 772 to 789 (HTHQAESTEASGQTQTSE) the composition is skewed to polar residues. Positions 790–828 (PASSGSRTTSAGTATPSSSGASGTTPSGSEGISTSGETT) are enriched in low complexity. 6 O-linked (GalNAc...) threonine glycosylation sites follow: Thr797, Thr798, Thr802, Thr804, Thr813, and Thr814. Residues 829–852 (RFSSNPSRDSHTTQSTTELLSASA) are compositionally biased toward polar residues. O-linked (GalNAc...) threonine glycosylation is found at Thr881, Thr886, and Thr892. Positions 885–903 (PTGQSSPTSPSASPQETAA) are enriched in low complexity. Polar residues predominate over residues 907–928 (MAQTQRTRTSRGSDTISLASQA). Residues 929–950 (TDTFSTVPPTPPSITSTGLTSP) are compositionally biased toward low complexity. Thr931, Thr934, Thr938, Thr943, Thr945, Thr948, Thr952, Thr954, Thr1003, Thr1007, Thr1012, Thr1019, Thr1022, Thr1023, Thr1028, Thr1030, Thr1035, Thr1039, Thr1044, Thr1051, Thr1055, Thr1060, Thr1062, Thr1067, Thr1071, Thr1076, Thr1083, Thr1086, Thr1087, Thr1092, Thr1094, Thr1099, Thr1103, Thr1108, Thr1110, Thr1115, Thr1118, Thr1119, Thr1124, Thr1126, Thr1131, Thr1135, Thr1172, Thr1179, Thr1182, Thr1183, Thr1188, Thr1195, Thr1199, Thr1204, Thr1236, Thr1243, Thr1246, and Thr1247 each carry an O-linked (GalNAc...) threonine glycan. Residues 951–963 (QTETHTLSPSGSG) are compositionally biased toward polar residues. Low complexity predominate over residues 1007 to 1024 (TPLPVTSPSSVSTGHTTP). Residues 1028–1054 (TDTSSESTGHVTPLPVTSFSSASTGDS) show a composition bias toward polar residues. Residues 1060–1086 (TDTSSASTGHVTPLPVTSLSSASTGDT) are compositionally biased toward polar residues. Over residues 1092-1118 (TDTSSASTGHATSLPVTDTSSVSTGHT) the composition is skewed to polar residues. 2 stretches are compositionally biased toward polar residues: residues 1124 to 1150 (TDTS…TGHT) and 1157 to 1197 (DASS…STGH). 2 stretches are compositionally biased toward polar residues: residues 1204-1213 (TDTSSASTGH) and 1221-1246 (DASS…TGHT). Residues 1252–1262 (TDTSSASTGQA) show a composition bias toward polar residues. Over residues 1263 to 1279 (TSLLVTDTSSVSTGDTT) the composition is skewed to low complexity. 17 O-linked (GalNAc...) threonine glycosylation sites follow: Thr1278, Thr1279, Thr1284, Thr1286, Thr1291, Thr1295, Thr1300, Thr1307, Thr1311, Thr1316, Thr1323, Thr1326, Thr1332, Thr1339, Thr1342, Thr1343, and Thr1348. Over residues 1281–1325 (LPVTSTSSASTGHVTPLHVTSPSSASTGHATPLPVTSLSSASTGD) the composition is skewed to polar residues. A compositionally biased stretch (polar residues) spans 1332–1342 (TSPSSASTGDT). Composition is skewed to polar residues over residues 1349 to 1358 (DASSVSTGHT) and 1365 to 1405 (DASS…STGH). 12 O-linked (GalNAc...) threonine glycosylation sites follow: Thr1380, Thr1387, Thr1390, Thr1391, Thr1396, Thr1403, Thr1407, Thr1412, Thr1444, Thr1451, Thr1454, and Thr1455. 2 stretches are compositionally biased toward polar residues: residues 1412 to 1421 (TDTSSASTGH) and 1429 to 1454 (DASS…TGHT). Residues 1460–1470 (TDTSSASTGQA) show a composition bias toward polar residues. The span at 1471–1487 (TSLLVTDTSSVSTGDTT) shows a compositional bias: low complexity. Thr1486, Thr1487, Thr1492, Thr1494, Thr1499, Thr1503, Thr1508, Thr1515, Thr1519, Thr1524, Thr1531, Thr1534, Thr1540, Thr1547, Thr1550, Thr1551, Thr1556, Thr1563, Thr1566, Thr1567, Thr1572, Thr1579, Thr1582, Thr1583, Thr1588, Thr1590, Thr1598, Thr1599, Thr1604, Thr1611, Thr1614, Thr1615, Thr1620, Thr1622, Thr1627, and Thr1630 each carry an O-linked (GalNAc...) threonine glycan. Residues 1489 to 1533 (LPVTSTSSASTGHVTPLHVTSPSSASTGHATPLPVTSLSSASTGD) are compositionally biased toward polar residues. Positions 1540–1550 (TSPSSASTGDT) are enriched in polar residues. Residues 1557–1582 (DASSVSTGHTTPLPVTSPSSASTGHT) show a composition bias toward polar residues. Polar residues predominate over residues 1588-1614 (TDTSSASKGDTTPLPVTSPSSASTGHT). A compositionally biased stretch (low complexity) spans 1620 to 1631 (TDTSSASTGDTT). Over residues 1633 to 1661 (LPVTNASSLSTGHATPLHVTSPSSASTGH) the composition is skewed to polar residues. Asn1637 carries an N-linked (GlcNAc...) asparagine glycan. O-linked (GalNAc...) threonine glycans are attached at residues Thr1659, Thr1663, Thr1668, Thr1670, Thr1675, Thr1679, Thr1716, Thr1723, Thr1726, Thr1727, Thr1732, Thr1764, Thr1766, Thr1812, Thr1819, Thr1822, Thr1823, Thr1828, Thr1835, Thr1838, Thr1839, Thr1844, Thr1854, and Thr1855. Residues 1668 to 1679 (TSTSSASTGHAT) are compositionally biased toward low complexity. Composition is skewed to polar residues over residues 1701 to 1741 (DVSS…STGH), 1749 to 1773 (DASS…STAH), and 1812 to 1822 (TSPSSASTGDT). A compositionally biased stretch (low complexity) spans 1828-1840 (TDASSASTGDTTS). Polar residues-rich tracts occupy residues 1841–1864 (LPVT…DASS), 1892–1902 (TDTNSASTGDT), and 1909–1950 (DASS…SGHT). 44 O-linked (GalNAc...) threonine glycosylation sites follow: Thr1931, Thr1934, Thr1935, Thr1940, Thr1950, Thr1951, Thr1956, Thr1963, Thr1995, Thr1999, Thr2004, Thr2006, Thr2015, Thr2020, Thr2027, Thr2030, Thr2031, Thr2036, Thr2038, Thr2047, Thr2052, Thr2062, Thr2063, Thr2132, Thr2137, Thr2139, Thr2142, Thr2143, Thr2148, Thr2150, Thr2155, Thr2159, Thr2164, Thr2180, Thr2182, Thr2187, Thr2191, Thr2196, Thr2198, Thr2203, Thr2207, Thr2244, Thr2254, and Thr2255. Polar residues predominate over residues 1957–1981 (DASSVPTGHATSLPVTDASSVSTGH). The segment covering 2004-2030 (TDTSSVSTGQATPLPVTSLSSASTGDT) has biased composition (polar residues). Over residues 2036 to 2077 (TDTSSASTGQDTPLPVTSLSSVSTGDTTPLPVTNPSSASTGH) the composition is skewed to polar residues. The segment covering 2125–2146 (DTTPLPVTSPSSTSTGDTTPLP) has biased composition (low complexity). Polar residues predominate over residues 2148–2189 (TETSSVSTGHATSLPVTDTSSASTGHATSLPVTDTSSASTGH). Polar residues-rich tracts occupy residues 2196–2219 (TDTS…SAST) and 2232–2254 (SAST…TGDT). The span at 2261 to 2270 (DASSVSTGHA) shows a compositional bias: polar residues. Residues 2271 to 2283 (TSLPVTSLSSVST) are compositionally biased toward low complexity. Residues Thr2283, Thr2286, Thr2287, Thr2292, Thr2299, Thr2303, Thr2308, Thr2324, Thr2331, Thr2334, Thr2335, Thr2340, Thr2347, Thr2351, Thr2356, Thr2363, Thr2366, Thr2367, Thr2372, Thr2382, Thr2383, Thr2388, Thr2395, Thr2398, Thr2399, and Thr2406 are each glycosylated (O-linked (GalNAc...) threonine). Residues 2284-2301 (GDTTPLPVTSPSSASTGH) show a composition bias toward polar residues. A compositionally biased stretch (polar residues) spans 2309 to 2349 (DASSASTGHATPLPVTSLSSASTGDTTPLPVTSPSSASTGH). Residues 2366–2399 (TTPLPVTSSSSASSGHTTPLPVTDASSASTGDTT) are compositionally biased toward low complexity. 2 stretches are compositionally biased toward polar residues: residues 2404-2413 (TDTSSASTGH) and 2421-2445 (GLSS…STGH). The N-linked (GlcNAc...) asparagine glycan is linked to Asn2437. 14 O-linked (GalNAc...) threonine glycosylation sites follow: Thr2452, Thr2454, Thr2459, Thr2462, Thr2463, Thr2468, Thr2500, Thr2507, Thr2510, Thr2511, Thr2516, Thr2518, Thr2523, and Thr2526. Residues 2452-2471 (TSTSSASTGDTTPLPGTDTS) are compositionally biased toward low complexity. Positions 2485 to 2510 (DASSVSTGDTTRLPVTSPSSASTGHT) are enriched in polar residues. A compositionally biased stretch (polar residues) spans 2517-2573 (DTPSASTGDTTPLPVTNASSLSTRHATSLHVTSPSSASTGHATSLPVTDTSAASTGH). Asn2533 carries an N-linked (GlcNAc...) asparagine glycan. O-linked (GalNAc...) threonine glycosylation is found at Thr2564, Thr2566, Thr2571, Thr2575, Thr2580, Thr2582, Thr2587, Thr2590, Thr2591, Thr2596, Thr2598, Thr2619, Thr2622, Thr2623, Thr2628, Thr2660, Thr2667, Thr2670, Thr2671, Thr2676, Thr2683, Thr2687, Thr2692, and Thr2694. Over residues 2580 to 2591 (TSTSSASTGDTT) the composition is skewed to low complexity. Composition is skewed to polar residues over residues 2597–2637 (DTYS…STGH) and 2645–2691 (DASS…SLPV). Residues 2692–2704 (TDTSSASTGDTTS) are compositionally biased toward low complexity. Positions 2705–2723 (LPVTDTSSAYTGDTTSLPV) are enriched in polar residues. The span at 2724–2735 (TDTSSSSTGDTT) shows a compositional bias: low complexity. Thr2740, Thr2742, Thr2750, Thr2751, Thr2756, Thr2758, Thr2763, and Thr2767 each carry an O-linked (GalNAc...) threonine glycan. Polar residues predominate over residues 2740 to 2750 (TETSSVSTGDT). A compositionally biased stretch (polar residues) spans 2756 to 2798 (TDTSSASTGHATPLPVTNTSSVSTGHATPLHVTSPSSASTGHT). Asn2773 carries N-linked (GlcNAc...) asparagine glycosylation. Thr2779, Thr2783, Thr2788, Thr2795, Thr2798, Thr2799, and Thr2804 each carry an O-linked (GalNAc...) threonine glycan. Polar residues-rich tracts occupy residues 2805-2814 (DASSVSTGHA) and 2837-2846 (IPSSASSGHT). Residues Thr2846, Thr2847, and Thr2852 are each glycosylated (O-linked (GalNAc...) threonine). The segment covering 2853-2877 (DASSVSTGHATSLPVTDASSVSTGH) has biased composition (polar residues). The segment covering 2895-2907 (TPLPLTSLSSVST) has biased composition (low complexity). Residues Thr2910, Thr2911, Thr2916, Thr2918, Thr2923, Thr2927, Thr2932, Thr2939, Thr2942, Thr2943, Thr2948, Thr2950, Thr2955, Thr2959, Thr2966, Thr2971, and Thr2975 are each glycosylated (O-linked (GalNAc...) threonine). The span at 2916–2942 (TDTSSASTGQATPLPVTSLSSVSTGDT) shows a compositional bias: polar residues. A compositionally biased stretch (polar residues) spans 2948-2973 (TDTSSASTGHATSLPVTDTSSASTGH). 2 stretches are compositionally biased toward polar residues: residues 2980–2989 (TDTSSASTGH) and 3009–3037 (LPVT…STGH). 4 O-linked (GalNAc...) threonine glycosylation sites follow: Thr3023, Thr3028, Thr3035, and Thr3039. Over residues 3044–3069 (TDTSSASTGHANPLHVTSPSSASTGH) the composition is skewed to polar residues. Thr3071, Thr3076, Thr3078, Thr3083, Thr3087, Thr3092, Thr3099, Thr3102, Thr3103, Thr3108, Thr3115, Thr3118, Thr3119, Thr3124, Thr3126, Thr3131, Thr3135, Thr3140, Thr3142, Thr3147, Thr3150, Thr3151, Thr3156, Thr3158, Thr3163, Thr3167, Thr3172, Thr3179, Thr3182, Thr3183, Thr3188, Thr3220, Thr3227, Thr3230, Thr3231, Thr3236, Thr3243, Thr3247, Thr3252, and Thr3254 each carry an O-linked (GalNAc...) threonine glycan. The span at 3076–3118 (TDTSSASTGHATPLPVTSLSSVSTGDTTPLPVTSPSSASTGHT) shows a compositional bias: polar residues. Residues 3124 to 3134 (TDTSSASTGQA) show a composition bias toward polar residues. Residues 3140–3151 (TSTSSASTGDTT) are compositionally biased toward low complexity. Composition is skewed to polar residues over residues 3156 to 3197 (TDTS…STGH) and 3205 to 3251 (DASS…SLPV). A compositionally biased stretch (low complexity) spans 3252–3264 (TDTSSASTGDTTS). The segment covering 3265–3283 (LPVTDTSSAYTGDTTSLPV) has biased composition (polar residues). Positions 3284 to 3295 (TDTSSSSTGDTT) are enriched in low complexity. Thr3294, Thr3332, Thr3339, Thr3342, Thr3343, Thr3348, Thr3350, Thr3355, and Thr3359 each carry an O-linked (GalNAc...) threonine glycan. The span at 3320–3337 (SASTGHATPLHVTSPSSA) shows a compositional bias: polar residues. Low complexity predominate over residues 3338-3356 (STGDTTPVPVTDTSSVSTG). Composition is skewed to polar residues over residues 3365-3374 (GLSSASTGDT) and 3381-3405 (DISS…STGD). An N-linked (GlcNAc...) asparagine glycan is attached at Asn3397. Thr3398, Thr3403, Thr3406, Thr3412, Thr3419, Thr3423, Thr3428, Thr3430, Thr3435, Thr3439, and Thr3444 each carry an O-linked (GalNAc...) threonine glycan. Residues 3412 to 3421 (TSPSSASTGH) show a composition bias toward polar residues. Residues 3428–3471 (TSTSSASTGHATPVPVTSTSSASTGHTTPLPVTDTSSASTGDTT) show a composition bias toward low complexity. Ser3445 is a glycosylation site (O-linked (GalNAc...) serine). 99 O-linked (GalNAc...) threonine glycosylation sites follow: Thr3446, Thr3451, Thr3454, Thr3455, Thr3460, Thr3462, Thr3467, Thr3470, Thr3471, Thr3476, Thr3483, Thr3486, Thr3487, Thr3492, Thr3499, Thr3502, Thr3504, Thr3508, Thr3515, Thr3519, Thr3524, Thr3526, Thr3531, Thr3535, Thr3540, Thr3547, Thr3550, Thr3551, Thr3556, Thr3567, Thr3614, Thr3615, Thr3622, Thr3678, Thr3679, Thr3686, Thr3691, Thr3695, Thr3700, Thr3710, Thr3711, Thr3716, Thr3718, Thr3723, Thr3727, Thr3732, Thr3739, Thr3743, Thr3748, Thr3780, Thr3787, Thr3790, Thr3791, Thr3796, Thr3798, Thr3803, Thr3807, Thr3812, Thr3822, Thr3823, Thr3828, Thr3835, Thr3839, Thr3844, Thr3851, Thr3854, Thr3860, Thr3867, Thr3871, Thr3876, Thr3883, Thr3886, Thr3887, Thr3892, Thr3894, Thr3899, Thr3903, Thr3935, Thr3940, Thr3942, Thr3947, Thr3950, Thr3951, Thr3956, Thr3958, Thr3963, Thr3967, Thr3972, Thr3979, Thr3983, Thr3988, Thr3990, Thr3995, Thr3999, Thr4004, Thr4006, Thr4011, Thr4015, and Thr4020. The segment covering 3473–3486 (LPVTSPSSASTGHT) has biased composition (polar residues). Residues 3493–3517 (IPSSASTGDTSTLPVTGASSASTGH) are compositionally biased toward polar residues. Polar residues predominate over residues 3524–3550 (TDTSSVSTGHATPLPVTSLSSVSTGDT). Residues 3557 to 3580 (DASSASTGQATPLPVTSLSSVSTG) are compositionally biased toward polar residues. Residues 3604 to 3615 (TDTSSASTGDTT) show a composition bias toward low complexity. A compositionally biased stretch (polar residues) spans 3620–3644 (TDTSSASTGQATPLPVTSLSSVSTG). The span at 3668–3679 (TDTSSASTGDTT) shows a compositional bias: low complexity. The span at 3684-3694 (TDTSSASTGQA) shows a compositional bias: polar residues. Over residues 3710–3728 (TTPLPVTSTSSVSTGHVTP) the composition is skewed to low complexity. Polar residues predominate over residues 3730–3741 (HVTSPSSASTGH). Residues 3780–3791 (TDASSASTGDTT) are compositionally biased toward low complexity. Positions 3796 to 3822 (TDTSSASTGQATPLPVTSLSSVSTGDT) are enriched in polar residues. Polar residues predominate over residues 3860-3869 (TSPSSASTGH). Positions 3877-3886 (GLSSASTGDT) are enriched in polar residues. Positions 3892–3901 (TDTSSASTRH) are enriched in polar residues. Low complexity predominate over residues 3940–3951 (TSTSSASTGDTT). Polar residues predominate over residues 3956-3981 (TDTSSVSTGHATSLPVTSRSSASTGH). Polar residues predominate over residues 3988-3997 (TDTSSVSTGH). Over residues 3999-4011 (TPLPVTSTSSVST) the composition is skewed to low complexity. Over residues 4018 to 4029 (PVTSPSSASTGH) the composition is skewed to polar residues. Residues Ser4021, Ser4023, Ser4024, and Ser4026 are each glycosylated (O-linked (GalNAc...) serine). O-linked (GalNAc...) threonine glycans are attached at residues Thr4027, Thr4031, and Thr4036. The span at 4030-4047 (ATPVPVTSTSSASTGDTT) shows a compositional bias: low complexity. The O-linked (GalNAc...) serine glycan is linked to Ser4037. Residues Thr4038, Thr4043, Thr4046, and Thr4047 are each glycosylated (O-linked (GalNAc...) threonine). The span at 4049–4093 (LPVTNASSLSTGHATPLHVTSPSSASRGDTSTLPVTDASSASTGH) shows a compositional bias: polar residues. Residue Asn4053 is glycosylated (N-linked (GlcNAc...) asparagine). Thr4078 and Thr4084 each carry an O-linked (GalNAc...) threonine glycan. Positions 4095–4107 (TPLPLTSLSSVST) are enriched in low complexity. Residues Thr4110, Thr4111, Thr4116, Thr4118, Thr4123, Thr4127, Thr4132, Thr4139, Thr4142, Thr4143, Thr4148, Thr4158, Thr4159, Thr4164, Thr4171, Thr4175, Thr4180, Thr4182, Thr4187, Thr4190, Thr4191, Thr4196, Thr4198, Thr4203, Thr4207, Thr4212, Thr4214, Thr4219, Thr4223, and Thr4239 are each glycosylated (O-linked (GalNAc...) threonine). Over residues 4116 to 4142 (TDTSSASTGQATPLPVTSLSSVSTGDT) the composition is skewed to polar residues. The span at 4149 to 4173 (IPSSASSGHTTSLPVTDASSVSTGH) shows a compositional bias: polar residues. Residues 4180-4191 (TSTSSASTGDTT) are compositionally biased toward low complexity. Residues 4196–4205 (TDTSSASTGH) show a composition bias toward polar residues. Residues 4212–4223 (TDTSSASTGHAT) are compositionally biased toward polar residues. The segment covering 4242–4254 (AVSSATSASTVSS) has biased composition (low complexity). A disordered region spans residues 4242-4288 (AVSSATSASTVSSDSPLKMETPGMTTPSLKTDGGRRTATSPPPTTSQ). 6 O-linked (GalNAc...) threonine glycosylation sites follow: Thr4272, Thr4278, Thr4280, Thr4289, Thr4293, and Thr4297. The region spanning 4397-4552 (PFWDDADFST…GLQFYRLHRE (156 aa)) is the NIDO domain. Residues 4553 to 4668 (ERPNYRLECL…YLCALYQQRR (116 aa)) form the AMOP domain. Positions 4680-4880 (QPAWMFGDPH…TWQINGTGLL (201 aa)) constitute a VWFD domain. N-linked (GlcNAc...) asparagine glycosylation is found at Asn4715, Asn4768, Asn4787, Asn4796, Asn4831, Asn4852, Asn4875, Asn4902, Asn4928, Asn4946, Asn4982, Asn4997, Asn5045, Asn5052, Asn5100, and Asn5119. The region spanning 5118–5157 (QNQSCPVNYCYNQGHCYISQTLGCQPMCTCPPAFTDSRCF) is the EGF-like 1 domain. Intrachain disulfides connect Cys5122-Cys5133, Cys5127-Cys5145, and Cys5147-Cys5156. N-linked (GlcNAc...) asparagine glycans are attached at residues Asn5185, Asn5192, and Asn5292. The EGF-like 2 domain occupies 5321 to 5360 (VSPCSRGYCDHGGQCQHLPSGPRCSCVSFSIYTAWGEHCE). Cystine bridges form between Cys5324–Cys5335, Cys5329–Cys5344, and Cys5346–Cys5359. Residues 5369-5389 (FFGIFFGALGGLLLLGVGTFV) form a helical membrane-spanning segment.

A heterodimeric complex, composed of a mucin-4 alpha chain and a cysteine-rich transmembrane mucin-4 beta chain. Mucin-4 beta chain interacts with ERBB2 via the EGF-like domain 1. In nonpolarized cells, associates with ERBB2 and ERBB3. In terms of processing, proteolytically cleaved into 2 chains, mucin-4 alpha chain and mucin-4 beta chain. Post-translationally, highly O-glycosylated. Is predominantly N-glycosylated. As to expression, expressed in the thymus, thyroid, lung, trachea, esophagus, stomach, small intestine, colon, testis, prostate, ovary, uterus, placenta, and mammary and salivary glands. Expressed in carcinomas arising from some of these epithelia, such as lung cancers, squamous cell carcinomas of the upper aerodigestive tract, mammary carcinomas, biliary tract, colon, and cervix cancers. Minimally or not expressed in the normal pancreas or chronic pancreatitis, but is highly expressed in pancreatic tumors and pancreatic tumor cell lines.

The protein localises to the cell membrane. The protein resides in the secreted. Its function is as follows. Membrane-bound mucin, a family of highly glycosylated proteins that constitute the major component of the mucus, the slimy and viscous secretion covering epithelial surfaces. These glycoproteins play important roles in the protection of the epithelium and are implicated in epithelial renewal and differentiation. Regulates cellular behavior through both anti-adhesive effects on cell-cell and cell-extracellular matrix interactions and its ability to act as an intramembrane ligand for ERBB2. Plays an important role in proliferation and differentiation of epithelial cells by inducing specific phosphorylation of ERBB2. In polarized epithelial cells, segregates ERBB2 and other ERBB receptors and prevents ERBB2 from acting as a coreceptor. The interaction with ERBB2 leads to enhanced expression of CDKN1B. The formation of a MUC4-ERBB2-ERBB3-NRG1 complex leads to down-regulation of CDKN1B, resulting in repression of apoptosis and stimulation of proliferation. Its ability to promote tumor growth may be mainly due to repression of apoptosis as opposed to proliferation. This chain is Mucin-4 (MUC4), found in Homo sapiens (Human).